The primary structure comprises 356 residues: Thymidine kinase (356 aa).

The segment at 1 to 29 is disordered; sequence MMDSRATYVPPKKISESNSNAEEDPTDCS. Residue 61-68 participates in ATP binding; it reads GCVGVGKT. Glu86 serves as the catalytic Proton acceptor. Gln122 serves as a coordination point for substrate. An ATP-binding site is contributed by Arg208. Residue Arg214 coordinates substrate.

It belongs to the herpesviridae thymidine kinase family. In terms of assembly, homodimer.

The catalysed reaction is thymidine + ATP = dTMP + ADP + H(+). Functionally, catalyzes the transfer of the gamma-phospho group of ATP to thymidine to generate dTMP in the salvage pathway of pyrimidine synthesis. The dTMP serves as a substrate for DNA polymerase during viral DNA replication. Allows the virus to be reactivated and to grow in non-proliferative cells lacking a high concentration of phosphorylated nucleic acid precursors. In Elephas maximus (Indian elephant), this protein is Thymidine kinase.